The following is a 186-amino-acid chain: Ferritin heavy chain (186 aa).

Residues 16–165 (QNYHQDSEAA…DHVTNLRKMG (150 aa)) enclose the Ferritin-like diiron domain. Residues E33, E68, H71, E113, and Q147 each contribute to the Fe cation site. Position 184 is a phosphoserine (S184).

The protein belongs to the ferritin family. As to quaternary structure, oligomer of 24 subunits. There are two types of subunits: L (light) chain and H (heavy) chain. The major chain can be light or heavy, depending on the species and tissue type. The functional molecule forms a roughly spherical shell with a diameter of 12 nm and contains a central cavity into which the insoluble mineral iron core is deposited. Interacts with NCOA4; NCOA4 promotes targeting of the iron-binding ferritin complex to autolysosomes following starvation or iron depletion.

It is found in the cytoplasm. Its subcellular location is the lysosome. The protein localises to the cytoplasmic vesicle. It localises to the autophagosome. It catalyses the reaction 4 Fe(2+) + O2 + 4 H(+) = 4 Fe(3+) + 2 H2O. Stores iron in a soluble, non-toxic, readily available form. Important for iron homeostasis. Has ferroxidase activity. Iron is taken up in the ferrous form and deposited as ferric hydroxides after oxidation. Also plays a role in delivery of iron to cells. Mediates iron uptake in capsule cells of the developing kidney. Delivery to lysosomes is mediated by the cargo receptor NCOA4 for autophagic degradation and release of iron. This chain is Ferritin heavy chain (FTH1), found in Cricetulus griseus (Chinese hamster).